The sequence spans 70 residues: ATP synthase subunit epsilon, mitochondrial (70 aa).

The protein belongs to the eukaryotic ATPase epsilon family. In terms of assembly, F-type ATPases have 2 components, CF(1) - the catalytic core - and CF(0) - the membrane proton channel. CF(1) has five subunits: alpha(3), beta(3), gamma(1), delta(1), epsilon(1). CF(0) has three main subunits: a, b and c.

It is found in the mitochondrion. The protein resides in the mitochondrion inner membrane. Mitochondrial membrane ATP synthase (F(1)F(0) ATP synthase or Complex V) produces ATP from ADP in the presence of a proton gradient across the membrane which is generated by electron transport complexes of the respiratory chain. F-type ATPases consist of two structural domains, F(1) - containing the extramembraneous catalytic core, and F(0) - containing the membrane proton channel, linked together by a central stalk and a peripheral stalk. During catalysis, ATP synthesis in the catalytic domain of F(1) is coupled via a rotary mechanism of the central stalk subunits to proton translocation. Part of the complex F(1) domain and of the central stalk which is part of the complex rotary element. Rotation of the central stalk against the surrounding alpha(3)beta(3) subunits leads to hydrolysis of ATP in three separate catalytic sites on the beta subunits. This Ipomoea batatas (Sweet potato) protein is ATP synthase subunit epsilon, mitochondrial.